The chain runs to 429 residues: S-adenosylmethionine synthase (429 aa).

A Mg(2+)-binding site is contributed by Glu-9. His-15 is an ATP binding site. Residue Glu-43 coordinates K(+). The L-methionine site is built by Glu-56 and Gln-99. Residues 167–169, 235–238, Asp-246, 252–253, Ala-269, Lys-273, and Lys-277 each bind ATP; these read DGK, SGRF, and RK. Asp-246 lines the L-methionine pocket. Lys-277 is a binding site for L-methionine.

This sequence belongs to the AdoMet synthase family. As to quaternary structure, homotetramer. Mn(2+) serves as cofactor. The cofactor is Mg(2+). Co(2+) is required as a cofactor. Requires K(+) as cofactor.

The protein resides in the cytoplasm. The enzyme catalyses L-methionine + ATP + H2O = S-adenosyl-L-methionine + phosphate + diphosphate. It functions in the pathway amino-acid biosynthesis; S-adenosyl-L-methionine biosynthesis; S-adenosyl-L-methionine from L-methionine: step 1/1. Functionally, catalyzes the formation of S-adenosylmethionine from methionine and ATP. The reaction comprises two steps that are both catalyzed by the same enzyme: formation of S-adenosylmethionine (AdoMet) and triphosphate, and subsequent hydrolysis of the triphosphate. The sequence is that of S-adenosylmethionine synthase (SAMS) from Carica papaya (Papaya).